The following is a 251-amino-acid chain: Phosphate import ATP-binding protein PstB (251 aa).

One can recognise an ABC transporter domain in the interval 5 to 246 (IKIRGVNFFY…PKDKRTEDYI (242 aa)). 37 to 44 (GPSGCGKS) serves as a coordination point for ATP.

The protein belongs to the ABC transporter superfamily. Phosphate importer (TC 3.A.1.7) family. As to quaternary structure, the complex is composed of two ATP-binding proteins (PstB), two transmembrane proteins (PstC and PstA) and a solute-binding protein (PstS).

Its subcellular location is the cell membrane. It catalyses the reaction phosphate(out) + ATP + H2O = ADP + 2 phosphate(in) + H(+). Part of the ABC transporter complex PstSACB involved in phosphate import. Responsible for energy coupling to the transport system. This chain is Phosphate import ATP-binding protein PstB, found in Dehalococcoides mccartyi (strain ATCC BAA-2266 / KCTC 15142 / 195) (Dehalococcoides ethenogenes (strain 195)).